The sequence spans 503 residues: Sarpagan bridge enzyme 1 (503 aa).

Residues 3 to 23 traverse the membrane as a helical; Signal-anchor for type II membrane protein segment; that stretch reads ISVTTSIALATIVFFLYKLAT. Residue C442 participates in heme binding.

It belongs to the cytochrome P450 family. It depends on heme as a cofactor. As to expression, highly expressed in roots. Expressed at low levels in leaves, stems and flowers.

The protein resides in the endoplasmic reticulum membrane. The catalysed reaction is (19E)-geissoschizine + reduced [NADPH--hemoprotein reductase] + O2 = polyneuridine aldehyde + oxidized [NADPH--hemoprotein reductase] + 2 H2O + H(+). It carries out the reaction tetrahydroalstonine + A + reduced [NADPH--hemoprotein reductase] + O2 = alstonine + AH2 + oxidized [NADPH--hemoprotein reductase] + 2 H2O + H(+). The enzyme catalyses ajmalicine + A + reduced [NADPH--hemoprotein reductase] + O2 = serpentine + AH2 + oxidized [NADPH--hemoprotein reductase] + 2 H2O + H(+). The protein operates within alkaloid biosynthesis; ajmaline biosynthesis. Its function is as follows. Monooxygenase involved in the biosynthesis of ajmaline-type monoterpenoid indole alkaloids (MIAs) natural products, important plant-derived pharmaceuticals used in the therapy of heart disorders. Converts by cyclization the strictosidine-derived geissoschizine to the sarpagan alkaloid polyneuridine aldehyde, precursor of vomilenine, an intermediate chemical in the biosynthesis of ajmaline. Converts by aromatization the tetrahydro-beta-carboline alkaloids tetrahydroalstonine and ajmalicine to the corresponding beta-carboline alkaloids alstonine and serpentine, respectively. The sequence is that of Sarpagan bridge enzyme 1 from Rauvolfia serpentina (Serpentine wood).